Consider the following 140-residue polypeptide: Neurotrophin-7 (140 aa).

The propeptide occupies 1–7 (PGPRVRR). Disulfide bonds link Cys21–Cys101, Cys64–Cys129, and Cys89–Cys131.

It belongs to the NGF-beta family.

The protein resides in the secreted. The protein is Neurotrophin-7 (ntf7) of Cyprinus carpio (Common carp).